A 33-amino-acid polypeptide reads, in one-letter code: U23-ctenitoxin-Pn1a (33 aa).

Intrachain disulfides connect C3–C16, C10–C21, and C15–C30.

Expressed by the venom gland.

The protein localises to the secreted. Non-toxic to mice. In Phoneutria nigriventer (Brazilian armed spider), this protein is U23-ctenitoxin-Pn1a.